The chain runs to 242 residues: MDIKLKDFEGPLDLLLHLVSKYQMDIYDVPITEVIEQYLAYVSTLQAMRLEVTGEYMVMASQLMLIKSRKLLPKVAEVTDLGDDLEQDLLSQIEEYRKFKLLGEHLEAKHQERAQYYSKAPTELIYEDAELVHDKTTIDLFLAFSNILAKKKEEFAQNHTTILRDEYKIEDMMIIVKESLIGRDQLRLQDLFKEAQNVQEIITLFLATLELIKTQELILVQEESFGDIYLMEKKEESQVPQS.

It belongs to the ScpA family. In terms of assembly, component of a cohesin-like complex composed of ScpA, ScpB and the Smc homodimer, in which ScpA and ScpB bind to the head domain of Smc. The presence of the three proteins is required for the association of the complex with DNA.

The protein localises to the cytoplasm. Its function is as follows. Participates in chromosomal partition during cell division. May act via the formation of a condensin-like complex containing Smc and ScpB that pull DNA away from mid-cell into both cell halves. This is Segregation and condensation protein A from Streptococcus pneumoniae serotype 19F (strain G54).